A 200-amino-acid polypeptide reads, in one-letter code: Probable nicotinate-nucleotide adenylyltransferase (200 aa).

It belongs to the NadD family.

The enzyme catalyses nicotinate beta-D-ribonucleotide + ATP + H(+) = deamido-NAD(+) + diphosphate. Its pathway is cofactor biosynthesis; NAD(+) biosynthesis; deamido-NAD(+) from nicotinate D-ribonucleotide: step 1/1. Catalyzes the reversible adenylation of nicotinate mononucleotide (NaMN) to nicotinic acid adenine dinucleotide (NaAD). The polypeptide is Probable nicotinate-nucleotide adenylyltransferase (Clostridium tetani (strain Massachusetts / E88)).